A 70-amino-acid polypeptide reads, in one-letter code: Sec-independent protein translocase protein TatA (70 aa).

Residues 1 to 21 form a helical membrane-spanning segment; sequence MAIGVNQLLIILVIIVLLFGA.

It belongs to the TatA/E family. In terms of assembly, the Tat system comprises two distinct complexes: a TatABC complex, containing multiple copies of TatA, TatB and TatC subunits, and a separate TatA complex, containing only TatA subunits. Substrates initially bind to the TatABC complex, which probably triggers association of the separate TatA complex to form the active translocon.

It localises to the cell inner membrane. Functionally, part of the twin-arginine translocation (Tat) system that transports large folded proteins containing a characteristic twin-arginine motif in their signal peptide across membranes. TatA could form the protein-conducting channel of the Tat system. This chain is Sec-independent protein translocase protein TatA, found in Campylobacter curvus (strain 525.92).